The chain runs to 56 residues: Large ribosomal subunit protein bL32 (56 aa).

Basic residues predominate over residues 1 to 20 (MAVPKRRTSRSNTRSRRSQW). Residues 1-24 (MAVPKRRTSRSNTRSRRSQWKAKV) form a disordered region.

It belongs to the bacterial ribosomal protein bL32 family.

The sequence is that of Large ribosomal subunit protein bL32 from Frankia casuarinae (strain DSM 45818 / CECT 9043 / HFP020203 / CcI3).